The chain runs to 157 residues: Anaerobic nitrite reductase Hb1 (157 aa).

One can recognise a Globin domain in the interval 5–154 (GFTEEQEALV…LAEAIKSEMK (150 aa)). A Homodimerization motif is present at residues 38 to 42 (EIAPA). 6 residues coordinate heme b: Ser48, Lys62, His66, Arg96, Thr100, and His101. The Homodimerization motif lies at 108–120 (AEHFEVTKLALLE).

The protein belongs to the plant globin family. In terms of assembly, homodimer. The cofactor is heme b. Predominantly expressed in leaves, to a lower extent in roots, and barely in stems, flowers and seeds.

The protein localises to the cytoplasm. It localises to the nucleus. It catalyses the reaction Fe(III)-heme b-[protein] + nitric oxide + H2O = Fe(II)-heme b-[protein] + nitrite + 2 H(+). Phytoglobin that reduces nitrite to nitric oxide (NO) under anoxic conditions (e.g. during flooding or in waterlogged soil) and upon root nodulation. Required for general plant development and during nodulation, especially for the onset of symbiosis. Monitors nitric oxide (NO) levels during early phase of the nitrogen-fixing symbiosis and buffers oxygen in functioning nodules. May not function as an oxygen storage or transport protein. Has an unusually high affinity for O(2) through a hexacoordinate heme iron because of a very low dissociation constant. Involved in water stress tolerance. This is Anaerobic nitrite reductase Hb1 from Glycine max (Soybean).